Consider the following 352-residue polypeptide: MSDSPVTLPESIKLTEYSHGAGCGCKISPKVLSTILASQLPVFTDPNLLVGNQSRDDAAVYKLNDDIGIISTTDFFMPIVDDPFTFGRIAATNAISDIYAMGGTPIMAIAILGWPINKLPAEVAQQVVDGGRQACMEAGIMLAGGHSIDAPEPIFGLAVTGQIALTDLKQNDTAKAGDRLYLTKPIGIGILTTAQKQKKLQDEDSHIAVNAMCQLNTIGTTIAKISGVNALTDVTGFGLAGHLLEMCQGTKLTAKLKFDAVPLLPRALDYLALGCVPGGTHRNYDSYGEHLPELSEHQKAILCDPQTSGGLLVAVSAEAEAELIALLDAHHIAPICIGSLETPTTEANVVLY.

C23 is a catalytic residue. Residues K26 and 54–56 (SRD) contribute to the ATP site. D57 contacts Mg(2+). ATP is bound by residues D74, D97, and 145–147 (GHS). Mg(2+) is bound at residue D97. Mg(2+) is bound at residue D233.

The protein belongs to the selenophosphate synthase 1 family. Class I subfamily. As to quaternary structure, homodimer. Mg(2+) is required as a cofactor.

It catalyses the reaction hydrogenselenide + ATP + H2O = selenophosphate + AMP + phosphate + 2 H(+). Functionally, synthesizes selenophosphate from selenide and ATP. The polypeptide is Selenide, water dikinase (Shewanella baltica (strain OS223)).